Reading from the N-terminus, the 233-residue chain is Putative N-acetylmuramoyl-L-alanine amidase (233 aa).

In terms of domain architecture, MurNAc-LAA spans 1 to 219; that stretch reads MIDPGHGGQD…IANAIYIALK (219 aa).

This sequence belongs to the N-acetylmuramoyl-L-alanine amidase 3 family.

Its subcellular location is the secreted. It catalyses the reaction Hydrolyzes the link between N-acetylmuramoyl residues and L-amino acid residues in certain cell-wall glycopeptides.. In terms of biological role, cell-wall hydrolase involved in septum cleavage during cell division. This is Putative N-acetylmuramoyl-L-alanine amidase (amiB) from Buchnera aphidicola subsp. Schizaphis graminum (strain Sg).